Here is a 325-residue protein sequence, read N- to C-terminus: Delta(1)-pyrroline-2-carboxylate reductase (325 aa).

The protein belongs to the ornithine cyclodeaminase/mu-crystallin family.

It catalyses the reaction L-proline + NAD(+) = 1-pyrroline-2-carboxylate + NADH + H(+). The enzyme catalyses L-proline + NADP(+) = 1-pyrroline-2-carboxylate + NADPH + H(+). Catalyzes the reduction of Delta(1)-pyrroline-2-carboxylate (Pyr2C) to L-proline, using preferentially NADPH over NADH as the electron donor. Is likely involved in a degradation pathway that converts trans-3-hydroxy-L-proline (t3LHyp) to L-proline, which allows B.cereus to grow on t3LHyp as a sole carbon source. This Bacillus cereus (strain ATCC 14579 / DSM 31 / CCUG 7414 / JCM 2152 / NBRC 15305 / NCIMB 9373 / NCTC 2599 / NRRL B-3711) protein is Delta(1)-pyrroline-2-carboxylate reductase.